The following is a 165-amino-acid chain: Transmembrane protein 128 (165 aa).

Transmembrane regions (helical) follow at residues 49–69 (NIHS…VDFF), 81–101 (WFLF…YCIV), 119–139 (LIPI…VALW), and 144–164 (FFTP…TSLL).

It localises to the membrane. This Bos taurus (Bovine) protein is Transmembrane protein 128 (TMEM128).